The sequence spans 57 residues: Small ribosomal subunit protein bS21 (57 aa).

Belongs to the bacterial ribosomal protein bS21 family.

The sequence is that of Small ribosomal subunit protein bS21 from Bacillus pumilus (strain SAFR-032).